Consider the following 347-residue polypeptide: Microneme protein 21 (347 aa).

It is found in the cytoplasmic vesicle. Its subcellular location is the secretory vesicle. It localises to the microneme. The protein localises to the secreted. This chain is Microneme protein 21, found in Toxoplasma gondii.